The sequence spans 375 residues: Non-structural protein NS5 (375 aa).

The sequence is that of Non-structural protein NS5 (NS-5) from Rottboellia (Sorghum).